We begin with the raw amino-acid sequence, 193 residues long: Transcriptional repressor NrdR (193 aa).

A zinc finger spans residues 3-34; that stretch reads CPYCGGLDTQVKDSRPSEDASAIRRRRICPDC. The region spanning 49-139 is the ATP-cone domain; sequence LTVVKRSGRK…VYKNFREAKD (91 aa). A disordered region spans residues 150 to 193; the sequence is DQQDGAVPQAEADRPIGAGPPSEAAQPAAGEGGDAPMRRARSRA.

It belongs to the NrdR family. Zn(2+) serves as cofactor.

Functionally, negatively regulates transcription of bacterial ribonucleotide reductase nrd genes and operons by binding to NrdR-boxes. The protein is Transcriptional repressor NrdR of Methylobacterium nodulans (strain LMG 21967 / CNCM I-2342 / ORS 2060).